A 632-amino-acid polypeptide reads, in one-letter code: 1-deoxy-D-xylulose-5-phosphate synthase (632 aa).

Thiamine diphosphate-binding positions include His72 and 113 to 115; that span reads GHA. A Mg(2+)-binding site is contributed by Asp144. Residues 145–146, Asn174, Tyr285, and Glu368 contribute to the thiamine diphosphate site; that span reads GA. Residue Asn174 coordinates Mg(2+).

Belongs to the transketolase family. DXPS subfamily. As to quaternary structure, homodimer. It depends on Mg(2+) as a cofactor. Thiamine diphosphate is required as a cofactor.

It catalyses the reaction D-glyceraldehyde 3-phosphate + pyruvate + H(+) = 1-deoxy-D-xylulose 5-phosphate + CO2. It functions in the pathway metabolic intermediate biosynthesis; 1-deoxy-D-xylulose 5-phosphate biosynthesis; 1-deoxy-D-xylulose 5-phosphate from D-glyceraldehyde 3-phosphate and pyruvate: step 1/1. In terms of biological role, catalyzes the acyloin condensation reaction between C atoms 2 and 3 of pyruvate and glyceraldehyde 3-phosphate to yield 1-deoxy-D-xylulose-5-phosphate (DXP). The protein is 1-deoxy-D-xylulose-5-phosphate synthase of Cyanothece sp. (strain PCC 7425 / ATCC 29141).